Here is a 227-residue protein sequence, read N- to C-terminus: Cytochrome c oxidase subunit 2 (227 aa).

The Mitochondrial intermembrane segment spans residues 1-14 (MAYPFQLGLQDATS). Residues 15–45 (PIMEELLHFHDHTLMIVFLISSLVLYIISLM) traverse the membrane as a helical segment. Residues 46 to 59 (LTTKLTHTSTMDAQ) lie on the Mitochondrial matrix side of the membrane. A helical transmembrane segment spans residues 60–87 (EVETVWTILPAIILILIALPSLRILYMM). Over 88-227 (DEINNPSLTV…YFETWSALMV (140 aa)) the chain is Mitochondrial intermembrane. Cu cation-binding residues include His-161, Cys-196, Glu-198, Cys-200, His-204, and Met-207. Glu-198 is a binding site for Mg(2+). Tyr-218 is modified (phosphotyrosine).

Belongs to the cytochrome c oxidase subunit 2 family. As to quaternary structure, component of the cytochrome c oxidase (complex IV, CIV), a multisubunit enzyme composed of 14 subunits. The complex is composed of a catalytic core of 3 subunits MT-CO1, MT-CO2 and MT-CO3, encoded in the mitochondrial DNA, and 11 supernumerary subunits COX4I, COX5A, COX5B, COX6A, COX6B, COX6C, COX7A, COX7B, COX7C, COX8 and NDUFA4, which are encoded in the nuclear genome. The complex exists as a monomer or a dimer and forms supercomplexes (SCs) in the inner mitochondrial membrane with NADH-ubiquinone oxidoreductase (complex I, CI) and ubiquinol-cytochrome c oxidoreductase (cytochrome b-c1 complex, complex III, CIII), resulting in different assemblies (supercomplex SCI(1)III(2)IV(1) and megacomplex MCI(2)III(2)IV(2)). Found in a complex with TMEM177, COA6, COX18, COX20, SCO1 and SCO2. Interacts with TMEM177 in a COX20-dependent manner. Interacts with COX20. Interacts with COX16. It depends on Cu cation as a cofactor.

It is found in the mitochondrion inner membrane. It catalyses the reaction 4 Fe(II)-[cytochrome c] + O2 + 8 H(+)(in) = 4 Fe(III)-[cytochrome c] + 2 H2O + 4 H(+)(out). In terms of biological role, component of the cytochrome c oxidase, the last enzyme in the mitochondrial electron transport chain which drives oxidative phosphorylation. The respiratory chain contains 3 multisubunit complexes succinate dehydrogenase (complex II, CII), ubiquinol-cytochrome c oxidoreductase (cytochrome b-c1 complex, complex III, CIII) and cytochrome c oxidase (complex IV, CIV), that cooperate to transfer electrons derived from NADH and succinate to molecular oxygen, creating an electrochemical gradient over the inner membrane that drives transmembrane transport and the ATP synthase. Cytochrome c oxidase is the component of the respiratory chain that catalyzes the reduction of oxygen to water. Electrons originating from reduced cytochrome c in the intermembrane space (IMS) are transferred via the dinuclear copper A center (CU(A)) of subunit 2 and heme A of subunit 1 to the active site in subunit 1, a binuclear center (BNC) formed by heme A3 and copper B (CU(B)). The BNC reduces molecular oxygen to 2 water molecules using 4 electrons from cytochrome c in the IMS and 4 protons from the mitochondrial matrix. This chain is Cytochrome c oxidase subunit 2 (MT-CO2), found in Canis adustus (Side-striped jackal).